Consider the following 346-residue polypeptide: Anthocyanidin 3-O-glucosyltransferase 2 (346 aa).

UDP-alpha-D-glucose-binding residues include Ala221, Gln223, His238, Trp241, Asn242, Ser243, and Glu246. Ala261 is an an anthocyanidin binding site. The UDP-alpha-D-glucose site is built by Glu262 and Gln263.

Belongs to the UDP-glycosyltransferase family. As to expression, expressed in cotyledons, roots and leaves.

The catalysed reaction is an anthocyanidin + UDP-alpha-D-glucose + H(+) = an anthocyanidin 3-O-beta-D-glucoside + UDP. It functions in the pathway pigment biosynthesis; anthocyanin biosynthesis. In the presence of other necessary color factors, this glycosylation reaction allows the accumulation of anthocyanin pigments. The polypeptide is Anthocyanidin 3-O-glucosyltransferase 2 (GT2) (Manihot esculenta (Cassava)).